We begin with the raw amino-acid sequence, 154 residues long: 3-hydroxyacyl-[acyl-carrier-protein] dehydratase FabZ (154 aa).

His55 is a catalytic residue.

This sequence belongs to the thioester dehydratase family. FabZ subfamily.

It is found in the cytoplasm. It catalyses the reaction a (3R)-hydroxyacyl-[ACP] = a (2E)-enoyl-[ACP] + H2O. Functionally, involved in unsaturated fatty acids biosynthesis. Catalyzes the dehydration of short chain beta-hydroxyacyl-ACPs and long chain saturated and unsaturated beta-hydroxyacyl-ACPs. The protein is 3-hydroxyacyl-[acyl-carrier-protein] dehydratase FabZ of Nitratidesulfovibrio vulgaris (strain ATCC 29579 / DSM 644 / CCUG 34227 / NCIMB 8303 / VKM B-1760 / Hildenborough) (Desulfovibrio vulgaris).